The sequence spans 662 residues: UvrABC system protein B (662 aa).

Residues 31 to 188 (DNIEGGEKAQ…NDLVDIQFER (158 aa)) form the Helicase ATP-binding domain. Position 44 to 51 (44 to 51 (GATGTGKT)) interacts with ATP. The Beta-hairpin signature appears at 97–120 (YYDYYQPEAYVPSSDTYIEKDSSV). The Helicase C-terminal domain occupies 435–601 (QIDDLLGEIN…TIKKEIRDLI (167 aa)). Residues 626-661 (KDMIKKLEGQMQEAAGLLDFELAAQIRDMILEIKAM) form the UVR domain.

This sequence belongs to the UvrB family. Forms a heterotetramer with UvrA during the search for lesions. Interacts with UvrC in an incision complex.

It localises to the cytoplasm. In terms of biological role, the UvrABC repair system catalyzes the recognition and processing of DNA lesions. A damage recognition complex composed of 2 UvrA and 2 UvrB subunits scans DNA for abnormalities. Upon binding of the UvrA(2)B(2) complex to a putative damaged site, the DNA wraps around one UvrB monomer. DNA wrap is dependent on ATP binding by UvrB and probably causes local melting of the DNA helix, facilitating insertion of UvrB beta-hairpin between the DNA strands. Then UvrB probes one DNA strand for the presence of a lesion. If a lesion is found the UvrA subunits dissociate and the UvrB-DNA preincision complex is formed. This complex is subsequently bound by UvrC and the second UvrB is released. If no lesion is found, the DNA wraps around the other UvrB subunit that will check the other stand for damage. The sequence is that of UvrABC system protein B from Streptococcus gordonii (strain Challis / ATCC 35105 / BCRC 15272 / CH1 / DL1 / V288).